Consider the following 52-residue polypeptide: Protein YabQ (52 aa).

In terms of biological role, identified as a multicopy suppressor of the slow growth phenotype of an rsgA (yjeQ) deletion mutant. This Escherichia coli (strain K12) protein is Protein YabQ (yabQ).